A 274-amino-acid polypeptide reads, in one-letter code: Large ribosomal subunit protein uL2cz/uL2cy (274 aa).

A disordered region spans residues Asn224 to Ala252.

Belongs to the universal ribosomal protein uL2 family. Part of the 50S ribosomal subunit.

It is found in the plastid. The protein localises to the chloroplast. In Capsella bursa-pastoris (Shepherd's purse), this protein is Large ribosomal subunit protein uL2cz/uL2cy (rpl2-A).